Here is a 324-residue protein sequence, read N- to C-terminus: Cysteine-rich repeat secretory protein 9 (324 aa).

A signal peptide spans 1 to 27 (MARIIITLTIPLFYFFFFSLLSHQTMS). Gnk2-homologous domains lie at 29–132 (PDHI…NVSF) and 138–248 (IVPS…TSVL). A disordered region spans residues 251–286 (PPPSPSAPPPRSPPPKSSPPSSLPQTPSPPLVFTPP).

Belongs to the cysteine-rich repeat secretory protein family.

It is found in the secreted. This is Cysteine-rich repeat secretory protein 9 (CRRSP9) from Arabidopsis thaliana (Mouse-ear cress).